The primary structure comprises 1895 residues: Probable WRKY transcription factor 19 (1895 aa).

Residues 1 to 85 are disordered; it reads MSEKEELPLT…SGSGLSQQLN (85 aa). The segment covering 10–22 has biased composition (polar residues); it reads TLTSIGAATATSD. The span at 28-39 shows a compositional bias: low complexity; it reads GSSGEGISSSSS. Polar residues predominate over residues 46–62; sequence MQNSPTGLMISQSSSMC. Residues 75-85 show a composition bias toward low complexity; the sequence is SSGSGLSQQLN. In terms of domain architecture, PAH spans 291–371; the sequence is RPLTIDGGGN…LGFNTYLSKE (81 aa). Residues 408–417 are compositionally biased toward polar residues; that stretch reads ANMQPQTEYP. Disordered stretches follow at residues 408-442, 517-538, and 580-620; these read ANMQ…SSLL, YKDR…TYLS, and EASD…ADAS. Low complexity predominate over residues 418 to 427; that stretch reads SSSAVQSFSS. Residues 428–442 show a composition bias toward polar residues; the sequence is GQPQIPTSAPDSSLL. A DNA-binding region (WRKY 1) is located at residues 462 to 526; sequence NVDKQVNDGY…YKDRHNHEPP (65 aa). A DNA-binding region (WRKY 2) is located at residues 635 to 700; the sequence is SEVDNLDDGY…SLCRRGISVY (66 aa). The TIR domain maps to 666 to 808; sequence KDYDVVIRYG…EIVRDALKVL (143 aa). In terms of domain architecture, NB-ARC spans 800-1087; that stretch reads IVRDALKVLC…LDGCGFSAHV (288 aa). Position 844–851 (844–851) interacts with ATP; that stretch reads GTVGIGKT. LRR repeat units lie at residues 1206–1227, 1228–1249, 1259–1281, 1282–1304, 1306–1328, 1329–1351, 1352–1371, 1373–1395, 1397–1419, and 1421–1442; these read KLRL…FNPE, NLVE…KKAR, KLKK…SSAT, NLEH…ISYL, KLVF…VDLE, SLEV…SPNV, KELY…IKNL, LLEK…IYKL, HLET…SRRM, and CLRF…ISYL. The segment at 1562–1583 is disordered; it reads ETVAPPSSSSEAREEEVETEET. The 252-residue stretch at 1626 to 1877 folds into the Protein kinase domain; the sequence is WQKGQLLGRG…AAELLNHPFV (252 aa). Residues 1632–1640 and Lys1654 each bind ATP; that span reads LGRGSLGSV. The active site involves Asp1758.

Belongs to the disease resistance X-TIR-NB-LRR-X family.

It localises to the nucleus. Its function is as follows. Transcription factor. Interacts specifically with the W box (5'-(T)TGAC[CT]-3'), a frequently occurring elicitor-responsive cis-acting element. May act also as a disease resistance protein with a serine/threonine-protein kinase activity. The chain is Probable WRKY transcription factor 19 (WRKY19) from Arabidopsis thaliana (Mouse-ear cress).